Reading from the N-terminus, the 195-residue chain is Peptidyl-tRNA hydrolase (195 aa).

Y17 provides a ligand contact to tRNA. H22 serves as the catalytic Proton acceptor. Residues F68, N70, and N116 each coordinate tRNA.

The protein belongs to the PTH family. In terms of assembly, monomer.

It is found in the cytoplasm. It carries out the reaction an N-acyl-L-alpha-aminoacyl-tRNA + H2O = an N-acyl-L-amino acid + a tRNA + H(+). In terms of biological role, hydrolyzes ribosome-free peptidyl-tRNAs (with 1 or more amino acids incorporated), which drop off the ribosome during protein synthesis, or as a result of ribosome stalling. Catalyzes the release of premature peptidyl moieties from peptidyl-tRNA molecules trapped in stalled 50S ribosomal subunits, and thus maintains levels of free tRNAs and 50S ribosomes. This is Peptidyl-tRNA hydrolase from Shewanella denitrificans (strain OS217 / ATCC BAA-1090 / DSM 15013).